A 232-amino-acid polypeptide reads, in one-letter code: 7-cyano-7-deazaguanine synthase (232 aa).

8–18 lines the ATP pocket; it reads FSGGQDSTTCL. 4 residues coordinate Zn(2+): cysteine 189, cysteine 198, cysteine 201, and cysteine 204.

The protein belongs to the QueC family. Zn(2+) serves as cofactor.

It catalyses the reaction 7-carboxy-7-deazaguanine + NH4(+) + ATP = 7-cyano-7-deazaguanine + ADP + phosphate + H2O + H(+). It participates in purine metabolism; 7-cyano-7-deazaguanine biosynthesis. Functionally, catalyzes the ATP-dependent conversion of 7-carboxy-7-deazaguanine (CDG) to 7-cyano-7-deazaguanine (preQ(0)). The chain is 7-cyano-7-deazaguanine synthase from Photorhabdus laumondii subsp. laumondii (strain DSM 15139 / CIP 105565 / TT01) (Photorhabdus luminescens subsp. laumondii).